We begin with the raw amino-acid sequence, 811 residues long: Probable potassium transporter 16 (811 aa).

Residues 1 to 66 lie on the Cytoplasmic side of the membrane; it reads MAQQQAGARG…GQESWMRTLR (66 aa). A helical transmembrane segment spans residues 67-87; it reads LGFQCVGILHADLGTSPLYVY. Residues 88 to 100 lie on the Extracellular side of the membrane; it reads QNTFKYGIKHEDD. Residues 101 to 121 traverse the membrane as a helical segment; sequence IIGVLSLIIYSFVLFTMVKIV. Over 122 to 190 the chain is Cytoplasmic; the sequence is FIALHANDDG…KSQLEKKPAK (69 aa). Residues 191–211 form a helical membrane-spanning segment; the sequence is IAVFFLTIFATALAISDCVLN. Topologically, residues 212-228 are extracellular; sequence PSVSVLSAVNGLKLRAP. A helical membrane pass occupies residues 229–249; that stretch reads HLTTDEVVWITVGILVVFFAV. Over 250–256 the chain is Cytoplasmic; the sequence is QRFGTDK. A helical transmembrane segment spans residues 257–277; that stretch reads IGYTFAPVVVVWLLLISGIGI. Residues 278–310 are Extracellular-facing; that stretch reads YDLVKYDVGVLRAFNPKYIIDYFRRNKKDGWVQ. The helical transmembrane segment at 311–331 threads the bilayer; sequence LGEVLLTFTGTEALFADLGYF. The Cytoplasmic portion of the chain corresponds to 332-337; it reads SIKSIQ. Residues 338 to 358 traverse the membrane as a helical segment; the sequence is LSSTFVLLPSVLCTYIGQAAY. The Extracellular segment spans residues 359–379; it reads LRKHMDQQHIQNAFFNSIPRP. Residues 380–400 form a helical membrane-spanning segment; it reads LFWPMFVLAIMTSVIGCQAMV. Topologically, residues 401–438 are cytoplasmic; the sequence is SCAFATMSHLQTLNCFPRIKILHTSRRYSGQLYSPEVN. Residues 439 to 459 form a helical membrane-spanning segment; sequence FFLCLLSCVITLSFRTTGFIV. Over 460–463 the chain is Extracellular; that stretch reads KAHE. The chain crosses the membrane as a helical span at residues 464–484; it reads ICVVLVMVITTILMTIVMLLV. Topologically, residues 485-488 are cytoplasmic; it reads WKVN. The helical transmembrane segment at 489–509 threads the bilayer; it reads IWWIVLFFVVFMSTETVYLSA. The Extracellular portion of the chain corresponds to 510–519; it reads VLYKFTKGPY. A helical membrane pass occupies residues 520–540; that stretch reads MPLAMSAVLMVIMFVWHYVHV. Over 541–811 the chain is Cytoplasmic; that stretch reads KRYKFELEHT…LLKVGITYEI (271 aa).

Belongs to the HAK/KUP transporter (TC 2.A.72.3) family.

Its subcellular location is the membrane. In terms of biological role, high-affinity potassium transporter. The chain is Probable potassium transporter 16 (HAK16) from Oryza sativa subsp. japonica (Rice).